Reading from the N-terminus, the 210-residue chain is Urease accessory protein UreG (210 aa).

Residue 15 to 22 (GPVGSGKT) coordinates GTP.

The protein belongs to the SIMIBI class G3E GTPase family. UreG subfamily. In terms of assembly, homodimer. UreD, UreF and UreG form a complex that acts as a GTP-hydrolysis-dependent molecular chaperone, activating the urease apoprotein by helping to assemble the nickel containing metallocenter of UreC. The UreE protein probably delivers the nickel.

Its subcellular location is the cytoplasm. Functionally, facilitates the functional incorporation of the urease nickel metallocenter. This process requires GTP hydrolysis, probably effectuated by UreG. This Ralstonia nicotianae (strain ATCC BAA-1114 / GMI1000) (Ralstonia solanacearum) protein is Urease accessory protein UreG.